Here is a 422-residue protein sequence, read N- to C-terminus: UDP-N-acetylmuramoylalanine--D-glutamate ligase (422 aa).

Residue 102–108 participates in ATP binding; sequence GTNGKTT.

The protein belongs to the MurCDEF family.

It is found in the cytoplasm. It carries out the reaction UDP-N-acetyl-alpha-D-muramoyl-L-alanine + D-glutamate + ATP = UDP-N-acetyl-alpha-D-muramoyl-L-alanyl-D-glutamate + ADP + phosphate + H(+). Its pathway is cell wall biogenesis; peptidoglycan biosynthesis. Its function is as follows. Cell wall formation. Catalyzes the addition of glutamate to the nucleotide precursor UDP-N-acetylmuramoyl-L-alanine (UMA). The protein is UDP-N-acetylmuramoylalanine--D-glutamate ligase of Helicobacter pylori (strain ATCC 700392 / 26695) (Campylobacter pylori).